An 826-amino-acid chain; its full sequence is Zinc phosphodiesterase ELAC protein 2 (826 aa).

Residues 1–16 constitute a mitochondrion transit peptide; sequence MWALCSLLRSATGRTM. A compositionally biased stretch (polar residues) spans 15 to 27; sequence TMSQGRTISQGSA. Disordered regions lie at residues 15 to 53 and 187 to 231; these read TMSQGRTISQGSARRQRPPKDPLRHLRTREKRGPSGSSG and SEQR…VSQR. Residues Ser199, Ser208, Ser212, Ser229, Ser618, and Ser736 each carry the phosphoserine modification. A compositionally biased stretch (basic and acidic residues) spans 208-224; that stretch reads SPERSSDSESNESEPHL. Residues 798 to 826 are disordered; it reads ALTDDLEDGEPQQKRAHTEEPQSKKVRAQ. Over residues 808-820 the composition is skewed to basic and acidic residues; that stretch reads PQQKRAHTEEPQS.

The protein belongs to the RNase Z family. Homodimer. Interacts with PTCD1. Zn(2+) is required as a cofactor.

It is found in the mitochondrion. It localises to the mitochondrion matrix. Its subcellular location is the mitochondrion nucleoid. The protein resides in the nucleus. It carries out the reaction Endonucleolytic cleavage of RNA, removing extra 3' nucleotides from tRNA precursor, generating 3' termini of tRNAs. A 3'-hydroxy group is left at the tRNA terminus and a 5'-phosphoryl group is left at the trailer molecule.. Zinc phosphodiesterase, which displays mitochondrial tRNA 3'-processing endonuclease activity. Involved in tRNA maturation, by removing a 3'-trailer from precursor tRNA. Associates with mitochondrial DNA complexes at the nucleoids to initiate RNA processing and ribosome assembly. This Macaca fascicularis (Crab-eating macaque) protein is Zinc phosphodiesterase ELAC protein 2 (ELAC2).